We begin with the raw amino-acid sequence, 500 residues long: Glutelin type-B 5 (500 aa).

A signal peptide spans Met-1–Ala-24. 2 disulfide bridges follow: Cys-45–Cys-78 and Cys-121–Cys-310. 2 Cupin type-1 domains span residues Leu-50 to Lys-245 and Leu-316 to Arg-465.

It belongs to the 11S seed storage protein (globulins) family. Hexamer; each subunit is composed of an acidic and a basic chain derived from a single precursor and linked by a disulfide bond.

Seed storage protein. The sequence is that of Glutelin type-B 5 (GLUB5) from Oryza sativa subsp. japonica (Rice).